Here is a 116-residue protein sequence, read N- to C-terminus: Small ribosomal subunit protein uS13 (116 aa).

Residues 92 to 116 (RRGLPVRGQNTKNNARTRKGTKRNR) form a disordered region. The span at 106–116 (ARTRKGTKRNR) shows a compositional bias: basic residues.

The protein belongs to the universal ribosomal protein uS13 family. Part of the 30S ribosomal subunit. Forms a loose heterodimer with protein S19. Forms two bridges to the 50S subunit in the 70S ribosome.

Its function is as follows. Located at the top of the head of the 30S subunit, it contacts several helices of the 16S rRNA. In the 70S ribosome it contacts the 23S rRNA (bridge B1a) and protein L5 of the 50S subunit (bridge B1b), connecting the 2 subunits; these bridges are implicated in subunit movement. Contacts the tRNAs in the A and P-sites. The polypeptide is Small ribosomal subunit protein uS13 (Lactobacillus acidophilus (strain ATCC 700396 / NCK56 / N2 / NCFM)).